Reading from the N-terminus, the 305-residue chain is Dermonecrotic toxin LiSicTox-alphaII1 (305 aa).

The signal sequence occupies residues methionine 1–glycine 18. Residues alanine 19–arginine 26 constitute a propeptide that is removed on maturation. The active site involves histidine 38. Positions 58 and 60 each coordinate Mg(2+). Histidine 74 acts as the Nucleophile in catalysis. 2 cysteine pairs are disulfide-bonded: cysteine 78/cysteine 84 and cysteine 80/cysteine 223. Position 118 (aspartate 118) interacts with Mg(2+).

Belongs to the arthropod phospholipase D family. Class II subfamily. Class IIa sub-subfamily. Requires Mg(2+) as cofactor. As to expression, expressed by the venom gland.

It localises to the secreted. The catalysed reaction is an N-(acyl)-sphingosylphosphocholine = an N-(acyl)-sphingosyl-1,3-cyclic phosphate + choline. It catalyses the reaction an N-(acyl)-sphingosylphosphoethanolamine = an N-(acyl)-sphingosyl-1,3-cyclic phosphate + ethanolamine. The enzyme catalyses a 1-acyl-sn-glycero-3-phosphocholine = a 1-acyl-sn-glycero-2,3-cyclic phosphate + choline. It carries out the reaction a 1-acyl-sn-glycero-3-phosphoethanolamine = a 1-acyl-sn-glycero-2,3-cyclic phosphate + ethanolamine. In terms of biological role, dermonecrotic toxins cleave the phosphodiester linkage between the phosphate and headgroup of certain phospholipids (sphingolipid and lysolipid substrates), forming an alcohol (often choline) and a cyclic phosphate. This toxin acts on sphingomyelin (SM) wih high activity. It may also act on ceramide phosphoethanolamine (CPE), lysophosphatidylcholine (LPC) and lysophosphatidylethanolamine (LPE), but not on lysophosphatidylserine (LPS), and lysophosphatidylglycerol (LPG). It acts by transphosphatidylation, releasing exclusively cyclic phosphate products as second products. Shows high hemolytic activity. Causes dermonecrosis, induces inflammatory response, platelet aggregation and increases vessel permeability. Shows no lethality when injected at higher dose into mice. May cause complement-dependent hemolysis as well as in a complement-independent manner. The hemolysis provoked in a complement-independent manner may be composed of several steps. The toxin may bind to erythrocyte membranes, may hydrolyze membrane phospholipids (SM and LPC) thus generating metabolism products that may cause hemolysis, probably by provoking an increase of calcium inside cells. The calcium influx may be due to the opening of L-type calcium channels, since L-type calcium channel blockers inhibit calcium influx. The chain is Dermonecrotic toxin LiSicTox-alphaII1 from Loxosceles intermedia (Brown spider).